A 240-amino-acid polypeptide reads, in one-letter code: Phosphatidylserine decarboxylase proenzyme (240 aa).

S209 functions as the Schiff-base intermediate with substrate; via pyruvic acid in the catalytic mechanism. S209 is subject to Pyruvic acid (Ser); by autocatalysis.

The protein belongs to the phosphatidylserine decarboxylase family. PSD-A subfamily. As to quaternary structure, heterodimer of a large membrane-associated beta subunit and a small pyruvoyl-containing alpha subunit. Pyruvate is required as a cofactor. Post-translationally, is synthesized initially as an inactive proenzyme. Formation of the active enzyme involves a self-maturation process in which the active site pyruvoyl group is generated from an internal serine residue via an autocatalytic post-translational modification. Two non-identical subunits are generated from the proenzyme in this reaction, and the pyruvate is formed at the N-terminus of the alpha chain, which is derived from the carboxyl end of the proenzyme. The post-translation cleavage follows an unusual pathway, termed non-hydrolytic serinolysis, in which the side chain hydroxyl group of the serine supplies its oxygen atom to form the C-terminus of the beta chain, while the remainder of the serine residue undergoes an oxidative deamination to produce ammonia and the pyruvoyl prosthetic group on the alpha chain.

The protein localises to the cell membrane. It carries out the reaction a 1,2-diacyl-sn-glycero-3-phospho-L-serine + H(+) = a 1,2-diacyl-sn-glycero-3-phosphoethanolamine + CO2. Its pathway is phospholipid metabolism; phosphatidylethanolamine biosynthesis; phosphatidylethanolamine from CDP-diacylglycerol: step 2/2. Functionally, catalyzes the formation of phosphatidylethanolamine (PtdEtn) from phosphatidylserine (PtdSer). The polypeptide is Phosphatidylserine decarboxylase proenzyme (Mycobacterium marinum (strain ATCC BAA-535 / M)).